The following is a 64-amino-acid chain: Small ribosomal subunit protein bS21 (64 aa).

Belongs to the bacterial ribosomal protein bS21 family.

This is Small ribosomal subunit protein bS21 from Pelagibacter ubique (strain HTCC1062).